Consider the following 312-residue polypeptide: Pyridoxal 5'-phosphate synthase subunit PDX1 (312 aa).

Asp43 is a D-ribose 5-phosphate binding site. Lys100 serves as the catalytic Schiff-base intermediate with D-ribose 5-phosphate. A D-ribose 5-phosphate-binding site is contributed by Gly172. Arg184 serves as a coordination point for D-glyceraldehyde 3-phosphate. Residues Gly233 and 254–255 (GS) contribute to the D-ribose 5-phosphate site.

It belongs to the PdxS/SNZ family.

It carries out the reaction aldehydo-D-ribose 5-phosphate + D-glyceraldehyde 3-phosphate + L-glutamine = pyridoxal 5'-phosphate + L-glutamate + phosphate + 3 H2O + H(+). The protein operates within cofactor biosynthesis; pyridoxal 5'-phosphate biosynthesis. Functionally, catalyzes the formation of pyridoxal 5'-phosphate from ribose 5-phosphate (RBP), glyceraldehyde 3-phosphate (G3P) and ammonia. The ammonia is provided by PDX2. Can also use ribulose 5-phosphate and dihydroxyacetone phosphate as substrates, resulting from enzyme-catalyzed isomerization of RBP and G3P, respectively. Also plays an indirect role in resistance to singlet oxygen-generating photosensitizers. The sequence is that of Pyridoxal 5'-phosphate synthase subunit PDX1 (PDX1) from Phaseolus vulgaris (Kidney bean).